Reading from the N-terminus, the 477-residue chain is uncharacterized protein (477 aa).

Transmembrane regions (helical) follow at residues Leu-31 to Thr-51, Leu-60 to Phe-80, Leu-103 to Leu-123, Met-130 to Gly-150, Leu-177 to Leu-197, Leu-205 to Trp-225, Ala-248 to Gly-268, Val-291 to Trp-311, Ile-334 to Ala-354, Ile-359 to Val-379, Gly-384 to Ile-404, and Val-433 to Val-453.

Belongs to the PucC family.

It localises to the cell membrane. This is an uncharacterized protein from Rhodobacter capsulatus (Rhodopseudomonas capsulata).